The primary structure comprises 485 residues: Cysteine--tRNA ligase (485 aa).

Residue Cys29 coordinates Zn(2+). The short motif at 31 to 41 is the 'HIGH' region element; sequence ATVQGMPHVGH. Positions 174 to 198 are disordered; sequence QRVEDMQDAPDADPRGKRDPHDFAL. The segment covering 185 to 197 has biased composition (basic and acidic residues); that stretch reads ADPRGKRDPHDFA. Zn(2+)-binding residues include Cys227, His252, and Glu256. The 'KMSKS' region motif lies at 283–287; sequence KMSKS. Lys286 contacts ATP.

This sequence belongs to the class-I aminoacyl-tRNA synthetase family. Monomer. Requires Zn(2+) as cofactor.

It is found in the cytoplasm. It carries out the reaction tRNA(Cys) + L-cysteine + ATP = L-cysteinyl-tRNA(Cys) + AMP + diphosphate. The protein is Cysteine--tRNA ligase of Micrococcus luteus (strain ATCC 4698 / DSM 20030 / JCM 1464 / CCM 169 / CCUG 5858 / IAM 1056 / NBRC 3333 / NCIMB 9278 / NCTC 2665 / VKM Ac-2230) (Micrococcus lysodeikticus).